We begin with the raw amino-acid sequence, 244 residues long: Tyrosine recombinase XerD-like (244 aa).

Residues 1–73 (MRDRISAFLE…ACNQFLYFLY (73 aa)) form the Core-binding (CB) domain. The Tyr recombinase domain occupies 90–244 (AEKKTEKPEI…KTVLTLEKYR (155 aa)). Residues K150 and R211 contribute to the active site. Y243 functions as the O-(3'-phospho-DNA)-tyrosine intermediate in the catalytic mechanism.

This sequence belongs to the 'phage' integrase family. XerD-like subfamily.

The protein resides in the cytoplasm. Putative tyrosine recombinase. Not involved in the cutting and rejoining of the recombining DNA molecules on dif(SL) site. In Streptococcus pneumoniae serotype 2 (strain D39 / NCTC 7466), this protein is Tyrosine recombinase XerD-like.